Consider the following 601-residue polypeptide: Arginine--tRNA ligase (601 aa).

Residues 133–143 (PNTNKPLHLGH) carry the 'HIGH' region motif.

Belongs to the class-I aminoacyl-tRNA synthetase family. In terms of assembly, monomer.

The protein resides in the cytoplasm. The catalysed reaction is tRNA(Arg) + L-arginine + ATP = L-arginyl-tRNA(Arg) + AMP + diphosphate. In Flavobacterium psychrophilum (strain ATCC 49511 / DSM 21280 / CIP 103535 / JIP02/86), this protein is Arginine--tRNA ligase.